The chain runs to 116 residues: Mercuric transport protein MerT (116 aa).

The next 2 helical transmembrane spans lie at 16–36 (LAAI…ALGF) and 46–66 (VLEP…FFAW). The Hg(2+) site is built by cysteine 24 and cysteine 25. Hg(2+) is bound by residues cysteine 76 and cysteine 82. The chain crosses the membrane as a helical span at residues 94-114 (IFWGVAVLVLVALGFPYVVPF).

This sequence belongs to the MerT family.

It is found in the cell inner membrane. In terms of biological role, involved in mercury resistance. Probably transfers a mercuric ion from the periplasmic Hg(2+)-binding protein MerP to the cytoplasmic mercuric reductase MerA. The polypeptide is Mercuric transport protein MerT (Pseudomonas fluorescens).